We begin with the raw amino-acid sequence, 92 residues long: Small ribosomal subunit protein uS19 (92 aa).

This sequence belongs to the universal ribosomal protein uS19 family.

Functionally, protein S19 forms a complex with S13 that binds strongly to the 16S ribosomal RNA. The polypeptide is Small ribosomal subunit protein uS19 (Brucella ovis (strain ATCC 25840 / 63/290 / NCTC 10512)).